The following is a 501-amino-acid chain: MSALRRKFGDDYQVVTTSSSGSGLQPQGPGQDPQQQLVPKKKRQRFVDKNGRCNVQHGNLGSETSRYLSDLFTTLVDLKWRWNLFIFILTYTVAWLFMASMWWVIAYTRGDLNKAHVGNYTPCVANVYNFPSAFLFFIETEATIGYGYRYITDKCPEGIILFLFQSILGSIVDAFLIGCMFIKMSQPKKRAETLMFSEHAVISMRDGKLTLMFRVGNLRNSHMVSAQIRCKLLKSRQTPEGEFLPLDQLELDVGFSTGADQLFLVSPLTICHVIDAKSPFYDLSQRSMQTEQFEIVVILEGIVETTGMTCQARTSYTEDEVLWGHRFFPVISLEEGFFKVDYSQFHATFEVPTPPYSVKEQEEMLLMSSPLIAPAITNSKERHNSVECLDGLDDITTKLPSKLQKITGREDFPKKLLRMSSTTSEKAYSLGDLPMKLQRISSVPGNSEEKLVSKTTKMLSDPMSQSVADLPPKLQKMAGGAARMEGNLPAKLRKMNSDRFT.

The tract at residues 1–40 (MSALRRKFGDDYQVVTTSSSGSGLQPQGPGQDPQQQLVPK) is disordered. Over 1 to 80 (MSALRRKFGD…LFTTLVDLKW (80 aa)) the chain is Cytoplasmic. Residues 18-38 (SSSGSGLQPQGPGQDPQQQLV) show a composition bias toward low complexity. The helical transmembrane segment at 81 to 105 (RWNLFIFILTYTVAWLFMASMWWVI) threads the bilayer. Over 106 to 129 (AYTRGDLNKAHVGNYTPCVANVYN) the chain is Extracellular. The N-linked (GlcNAc...) asparagine glycan is linked to asparagine 119. Positions 130 to 141 (FPSAFLFFIETE) form an intramembrane region, helical; Pore-forming. The pore-forming intramembrane region spans 142–148 (ATIGYGY). Positions 143–148 (TIGYGY) match the Selectivity filter motif. Residues 149-157 (RYITDKCPE) are Extracellular-facing. The chain crosses the membrane as a helical span at residues 158–179 (GIILFLFQSILGSIVDAFLIGC). The Cytoplasmic segment spans residues 180–501 (MFIKMSQPKK…LRKMNSDRFT (322 aa)). Residues 182-209 (IKMSQPKKRAETLMFSEHAVISMRDGKL) form a polyphosphoinositide (PIP2)-binding region. 2 positions are modified to phosphoserine: serine 385 and serine 424.

This sequence belongs to the inward rectifier-type potassium channel (TC 1.A.2.1) family. KCNJ3 subfamily. In terms of assembly, associates with KCNJ5/GIRK4 or KCNJ6/GIRK2 to form a G-protein activated heteromultimer pore-forming unit. The resulting inward current is much larger. Associates with KCNJ9/GIRK3 to form a G-protein activated heteromultimer pore-forming unit.

Its subcellular location is the membrane. It catalyses the reaction K(+)(in) = K(+)(out). Heteromultimer composed of KCNJ3/GIRK1 and KCNJ5/GIRK4 is activated by phosphatidylinositol 4,5 biphosphate (PtdIns(4,5)P2). Its function is as follows. Inward rectifier potassium channels are characterized by a greater tendency to allow potassium to flow into the cell rather than out of it. Their voltage dependence is regulated by the concentration of extracellular potassium; as external potassium is raised, the voltage range of the channel opening shifts to more positive voltages. The inward rectification is mainly due to the blockage of outward current by internal magnesium. This potassium channel is controlled by G proteins. This receptor plays a crucial role in regulating the heartbeat. The polypeptide is G protein-activated inward rectifier potassium channel 1 (KCNJ3) (Homo sapiens (Human)).